The chain runs to 570 residues: Sulfite reductase [NADPH] hemoprotein beta-component (570 aa).

4 residues coordinate [4Fe-4S] cluster: Cys-434, Cys-440, Cys-479, and Cys-483. Cys-483 serves as a coordination point for siroheme.

The protein belongs to the nitrite and sulfite reductase 4Fe-4S domain family. In terms of assembly, alpha(8)-beta(8). The alpha component is a flavoprotein, the beta component is a hemoprotein. Requires siroheme as cofactor. [4Fe-4S] cluster is required as a cofactor.

The enzyme catalyses hydrogen sulfide + 3 NADP(+) + 3 H2O = sulfite + 3 NADPH + 4 H(+). The protein operates within sulfur metabolism; hydrogen sulfide biosynthesis; hydrogen sulfide from sulfite (NADPH route): step 1/1. Its function is as follows. Component of the sulfite reductase complex that catalyzes the 6-electron reduction of sulfite to sulfide. This is one of several activities required for the biosynthesis of L-cysteine from sulfate. This Salmonella paratyphi B (strain ATCC BAA-1250 / SPB7) protein is Sulfite reductase [NADPH] hemoprotein beta-component.